A 515-amino-acid polypeptide reads, in one-letter code: 2-isopropylmalate synthase (515 aa).

Residues 5 to 267 (VIIFDTTLRD…RTGINHEEIH (263 aa)) enclose the Pyruvate carboxyltransferase domain. Asp14, His202, His204, and Asn238 together coordinate Mn(2+). The regulatory domain stretch occupies residues 392–515 (KLNYLSVQSG…EMKQKKIATV (124 aa)).

The protein belongs to the alpha-IPM synthase/homocitrate synthase family. LeuA type 1 subfamily. Homodimer. It depends on Mn(2+) as a cofactor.

It localises to the cytoplasm. It catalyses the reaction 3-methyl-2-oxobutanoate + acetyl-CoA + H2O = (2S)-2-isopropylmalate + CoA + H(+). It participates in amino-acid biosynthesis; L-leucine biosynthesis; L-leucine from 3-methyl-2-oxobutanoate: step 1/4. Its function is as follows. Catalyzes the condensation of the acetyl group of acetyl-CoA with 3-methyl-2-oxobutanoate (2-ketoisovalerate) to form 3-carboxy-3-hydroxy-4-methylpentanoate (2-isopropylmalate). The polypeptide is 2-isopropylmalate synthase (Vibrio vulnificus (strain CMCP6)).